A 283-amino-acid chain; its full sequence is 2-dehydro-3-deoxyphosphooctonate aldolase (283 aa).

It belongs to the KdsA family.

The protein localises to the cytoplasm. The enzyme catalyses D-arabinose 5-phosphate + phosphoenolpyruvate + H2O = 3-deoxy-alpha-D-manno-2-octulosonate-8-phosphate + phosphate. It functions in the pathway carbohydrate biosynthesis; 3-deoxy-D-manno-octulosonate biosynthesis; 3-deoxy-D-manno-octulosonate from D-ribulose 5-phosphate: step 2/3. The protein operates within bacterial outer membrane biogenesis; lipopolysaccharide biosynthesis. This is 2-dehydro-3-deoxyphosphooctonate aldolase from Prochlorococcus marinus (strain MIT 9313).